Here is a 487-residue protein sequence, read N- to C-terminus: Berbamunine synthase (487 aa).

Residue Cys-429 coordinates heme.

This sequence belongs to the cytochrome P450 family. The cofactor is heme.

The protein localises to the endoplasmic reticulum membrane. It localises to the microsome membrane. The enzyme catalyses (R)-N-methylcoclaurine + (S)-N-methylcoclaurine + reduced [NADPH--hemoprotein reductase] + O2 = berbamunine + oxidized [NADPH--hemoprotein reductase] + 2 H2O + H(+). The protein operates within alkaloid biosynthesis; berbamunine biosynthesis; berbamunine from (R)-N-methylcoclaurine and (S)-N-methylcoclaurine: step 1/1. In terms of biological role, forms the bisbenzylisoquinoline alkaloid berbamunine by phenol oxidation of N-methylcoclaurine without the incorporation of oxygen into the product. Oxidatively couples either two molecules of (R)-N-methylcoclaurine to form the (R,R) dimer guattegaumerine or one molecule each of (R)- and (S)-N-methylcoclaurine to form the (R,S) dimer berbamunine. In Berberis stolonifera (Barberry), this protein is Berbamunine synthase (CYP80A1).